A 233-amino-acid polypeptide reads, in one-letter code: Large ribosomal subunit protein uL1 (233 aa).

The protein belongs to the universal ribosomal protein uL1 family. Part of the 50S ribosomal subunit.

Its function is as follows. Binds directly to 23S rRNA. The L1 stalk is quite mobile in the ribosome, and is involved in E site tRNA release. Protein L1 is also a translational repressor protein, it controls the translation of the L11 operon by binding to its mRNA. The protein is Large ribosomal subunit protein uL1 of Proteus mirabilis (strain HI4320).